The following is a 104-amino-acid chain: Large ribosomal subunit protein uL23 (104 aa).

The protein belongs to the universal ribosomal protein uL23 family. Part of the 50S ribosomal subunit. Contacts protein L29, and trigger factor when it is bound to the ribosome.

One of the early assembly proteins it binds 23S rRNA. One of the proteins that surrounds the polypeptide exit tunnel on the outside of the ribosome. Forms the main docking site for trigger factor binding to the ribosome. The chain is Large ribosomal subunit protein uL23 from Ralstonia nicotianae (strain ATCC BAA-1114 / GMI1000) (Ralstonia solanacearum).